Reading from the N-terminus, the 516-residue chain is D-alanine--D-alanyl carrier protein ligase (516 aa).

156–157 (TS) lines the ATP pocket. Residue Asp203 coordinates D-alanine. 298-303 (NAYGPT) serves as a coordination point for ATP. Position 307 (Val307) interacts with D-alanine. Residues Asp389, 401–404 (YGGR), and Lys503 contribute to the ATP site. Lys503 lines the D-alanine pocket.

It belongs to the ATP-dependent AMP-binding enzyme family. DltA subfamily.

The protein localises to the cytoplasm. The enzyme catalyses holo-[D-alanyl-carrier protein] + D-alanine + ATP = D-alanyl-[D-alanyl-carrier protein] + AMP + diphosphate. It functions in the pathway cell wall biogenesis; lipoteichoic acid biosynthesis. Its function is as follows. Catalyzes the first step in the D-alanylation of lipoteichoic acid (LTA), the activation of D-alanine and its transfer onto the D-alanyl carrier protein (Dcp) DltC. In an ATP-dependent two-step reaction, forms a high energy D-alanyl-AMP intermediate, followed by transfer of the D-alanyl residue as a thiol ester to the phosphopantheinyl prosthetic group of the Dcp. D-alanylation of LTA plays an important role in modulating the properties of the cell wall in Gram-positive bacteria, influencing the net charge of the cell wall. The protein is D-alanine--D-alanyl carrier protein ligase of Streptococcus pneumoniae (strain ATCC 700669 / Spain 23F-1).